Here is a 170-residue protein sequence, read N- to C-terminus: MPRSRINGNFIDKTSSIVANILLQIIPTTSGEKRAFTYYRDGMLAQSEGNYAEALQNYYEATRLEIDPYDRSYILYNIGLIHTSNGEHTKALEYYFRALERNPFLPQAFNNMAVICHYRGEQAILQGDSEIAEAWFDQAAEYWKQAIALTPGNYIEAQNWLKITKRFEFE.

3 TPR repeats span residues 35–68 (AFTY…EIDP), 72–105 (SYIL…NPFL), and 120–153 (GEQA…TPGN).

It belongs to the Ycf3 family.

It localises to the plastid. The protein resides in the chloroplast thylakoid membrane. Functionally, essential for the assembly of the photosystem I (PSI) complex. May act as a chaperone-like factor to guide the assembly of the PSI subunits. The protein is Photosystem I assembly protein Ycf3 of Saccharum officinarum (Sugarcane).